Here is a 343-residue protein sequence, read N- to C-terminus: Nicotianamine synthase 3 (343 aa).

Belongs to the nicotianamine synthase (NAS)-like family. As to expression, expressed in leaves.

It carries out the reaction 3 S-adenosyl-L-methionine = nicotianamine + 3 S-methyl-5'-thioadenosine + 3 H(+). Functionally, synthesizes nicotianamine, a polyamine that is the first intermediate in the synthesis of the phytosiderophores of the mugineic acid type found in gramineae which serve as a sensor for the physiological iron status within the plant, and/or might be involved in the transport of iron. This chain is Nicotianamine synthase 3 (NAS3), found in Oryza sativa subsp. indica (Rice).